Consider the following 572-residue polypeptide: Vacuolar protein sorting-associated protein vps901 (572 aa).

Basic and acidic residues-rich tracts occupy residues 1-31 and 39-53; these read MDYP…EKPL and DEQR…KNHD. The disordered stretch occupies residues 1-108; the sequence is MDYPSFHEDP…HENNPGQQEI (108 aa). A compositionally biased stretch (polar residues) spans 69-80; sequence QYEQTDSSSDQE. The span at 82 to 98 shows a compositional bias: basic and acidic residues; the sequence is MNEKQSLDKENRNDNIP. The 139-residue stretch at 219–357 folds into the VPS9 domain; sequence VEEDRVLSEK…IETLDCSSLT (139 aa). The interval 430–502 is disordered; sequence QIDTPESKEY…IVHEEQPVDD (73 aa). Polar residues predominate over residues 445-457; that stretch reads PRGSSHSGSFTTD. In terms of domain architecture, CUE spans 529–571; sequence REKAEAITALRAMFPAFDSEVIEVVLNAQQGRLSSSIDSLLEM.

Functionally, required for vacuolar protein sorting; may be required for the consumption of transport vesicles containing vacuolar protein precursors. Required for vacuolar fusion. The sequence is that of Vacuolar protein sorting-associated protein vps901 (vps901) from Schizosaccharomyces pombe (strain 972 / ATCC 24843) (Fission yeast).